The chain runs to 391 residues: Trehalose-phosphate phosphatase (391 aa).

Aspartate 147 acts as the Nucleophile in catalysis. Residues aspartate 147, aspartate 149, and aspartate 330 each coordinate Mg(2+). 147–149 (DFD) contacts substrate.

Belongs to the trehalose phosphatase family. The cofactor is Mg(2+).

It catalyses the reaction alpha,alpha-trehalose 6-phosphate + H2O = alpha,alpha-trehalose + phosphate. It participates in glycan biosynthesis; trehalose biosynthesis. In terms of biological role, removes the phosphate from trehalose 6-phosphate to produce free trehalose. This chain is Trehalose-phosphate phosphatase (otsB), found in Mycolicibacterium paratuberculosis (strain ATCC BAA-968 / K-10) (Mycobacterium paratuberculosis).